Consider the following 393-residue polypeptide: MEENNLQCSSVVDGNFEEVPRETAIQFKPPLYRQRYQFVKNLVDQHEPKKVADLGCGDTSLLRLLKVNPCIELLVGVDINEDKLRWRGDSLAPFLGDFLKPRDLNLTITLYHGSVVERDSRLLGFDLITCIELIEHLDSGDLARFPEVVFGYLSPSMIVISTPNSEFNPLFPSVTLRDSDHKFEWTRMEFQTWALYVANRYDYSVEFTGVGEPPAGAENVGYCTQIGIFRKNGGKATESCLSEQHDQHVYKAVFTTSYPSLQQERFFKLVLVNEVSQQVESLRVSHLPRRKEQAGERGDKPKDIGGSKAPVPCFGPVFTEVEKAKIENSPTPFCVGDKFFVPLQRLLAYPKLNRLCANEEMMRSVIADSIPLSSDGSAVVADLRNYFDEQFEF.

Tyrosine 36, glycine 55, aspartate 78, lysine 83, valine 115, and isoleucine 131 together coordinate S-adenosyl-L-methionine. Mg(2+)-binding residues include glutamate 132, glutamate 135, histidine 136, and histidine 181. Residues 286-307 form a disordered region; that stretch reads HLPRRKEQAGERGDKPKDIGGS. Residues 290–305 show a composition bias toward basic and acidic residues; the sequence is RKEQAGERGDKPKDIG.

Belongs to the methyltransferase superfamily. HEN1 family. Requires Mg(2+) as cofactor.

The protein localises to the cytoplasm. The enzyme catalyses small RNA 3'-end nucleotide + S-adenosyl-L-methionine = small RNA 3'-end 2'-O-methylnucleotide + S-adenosyl-L-homocysteine + H(+). Functionally, methyltransferase that adds a 2'-O-methyl group at the 3'-end of piRNAs, a class of 24 to 30 nucleotide RNAs that are generated by a Dicer-independent mechanism and are primarily derived from transposons and other repeated sequence elements. This probably protects the 3'-end of piRNAs from uridylation activity and subsequent degradation. Stabilization of piRNAs is essential for gametogenesis. The polypeptide is Small RNA 2'-O-methyltransferase (HENMT1) (Homo sapiens (Human)).